Here is a 366-residue protein sequence, read N- to C-terminus: Cell division protein FtsZ 1 (366 aa).

GTP contacts are provided by residues 45-49 (GAGCN), 132-134 (GTG), glutamate 163, arginine 167, and aspartate 210. Positions 344–354 (PEEETPLETPE) are enriched in acidic residues. Residues 344 to 366 (PEEETPLETPEESPSIEISIPEL) form a disordered region. Low complexity predominate over residues 355-366 (ESPSIEISIPEL).

The protein belongs to the FtsZ family. Homodimer. Polymerizes to form a dynamic ring structure in a strictly GTP-dependent manner. Interacts directly with several other division proteins.

It is found in the cytoplasm. Functionally, essential cell division protein that forms a contractile ring structure (Z ring) at the future cell division site. The regulation of the ring assembly controls the timing and the location of cell division. One of the functions of the FtsZ ring is to recruit other cell division proteins to the septum to produce a new cell wall between the dividing cells. Binds GTP and shows GTPase activity. This Pyrococcus woesei protein is Cell division protein FtsZ 1.